The following is a 338-amino-acid chain: Endonuclease V (338 aa).

Mg(2+)-binding residues include D52 and D126. The segment at 253 to 338 (QLGVAPAQRK…PSPAWVQSPP (86 aa)) is disordered. Composition is skewed to basic and acidic residues over residues 260 to 270 (QRKDRSQKEQR) and 287 to 323 (RPPE…HQED). Residues 328 to 338 (PPSPAWVQSPP) show a composition bias toward pro residues.

This sequence belongs to the endonuclease V family. In terms of assembly, monomer. Interacts with PABPC1; the interaction is RNA-dependent and stimulates ENDOV activity. Mg(2+) is required as a cofactor. In terms of tissue distribution, highest levels detected in liver with high levels also found in heart, kidney and testis. Expressed at low levels in brain.

The protein localises to the cytoplasm. It is found in the nucleus. It localises to the nucleolus. The protein resides in the stress granule. Endoribonuclease that specifically cleaves inosine-containing RNAs: cleaves RNA at the second phosphodiester bond 3' to inosine. Active against both single-stranded and double-stranded RNAs. Has strong preference for single-stranded RNAs (ssRNAs) toward double-stranded RNAs (dsRNAs). Cleaves mRNAs and tRNAs containing inosine. Also able to cleave structure-specific dsRNA substrates containing the specific sites 5'-IIUI-3' and 5'-UIUU-3'. Inosine is present in a number of RNAs following editing; the function of inosine-specific endoribonuclease is still unclear: it could either play a regulatory role in edited RNAs, or be involved in antiviral response by removing the hyperedited long viral dsRNA genome that has undergone A-to-I editing. Binds branched DNA structures. This is Endonuclease V (Endov) from Mus musculus (Mouse).